The following is a 335-amino-acid chain: N-acetyl-gamma-glutamyl-phosphate reductase (335 aa).

The active site involves C147.

Belongs to the NAGSA dehydrogenase family. Type 1 subfamily.

It is found in the cytoplasm. It carries out the reaction N-acetyl-L-glutamate 5-semialdehyde + phosphate + NADP(+) = N-acetyl-L-glutamyl 5-phosphate + NADPH + H(+). The protein operates within amino-acid biosynthesis; L-arginine biosynthesis; N(2)-acetyl-L-ornithine from L-glutamate: step 3/4. Functionally, catalyzes the NADPH-dependent reduction of N-acetyl-5-glutamyl phosphate to yield N-acetyl-L-glutamate 5-semialdehyde. The chain is N-acetyl-gamma-glutamyl-phosphate reductase from Campylobacter hominis (strain ATCC BAA-381 / DSM 21671 / CCUG 45161 / LMG 19568 / NCTC 13146 / CH001A).